We begin with the raw amino-acid sequence, 309 residues long: Aspartate carbamoyltransferase catalytic subunit (309 aa).

Positions 58 and 59 each coordinate carbamoyl phosphate. K86 is an L-aspartate binding site. R108, H136, and Q139 together coordinate carbamoyl phosphate. Residues R170 and R224 each contribute to the L-aspartate site. Residues G266 and P267 each coordinate carbamoyl phosphate.

The protein belongs to the aspartate/ornithine carbamoyltransferase superfamily. ATCase family. In terms of assembly, heterododecamer (2C3:3R2) of six catalytic PyrB chains organized as two trimers (C3), and six regulatory PyrI chains organized as three dimers (R2).

It catalyses the reaction carbamoyl phosphate + L-aspartate = N-carbamoyl-L-aspartate + phosphate + H(+). It functions in the pathway pyrimidine metabolism; UMP biosynthesis via de novo pathway; (S)-dihydroorotate from bicarbonate: step 2/3. Catalyzes the condensation of carbamoyl phosphate and aspartate to form carbamoyl aspartate and inorganic phosphate, the committed step in the de novo pyrimidine nucleotide biosynthesis pathway. The polypeptide is Aspartate carbamoyltransferase catalytic subunit (Campylobacter curvus (strain 525.92)).